The primary structure comprises 177 residues: Alkyl hydroperoxide reductase AhpD (177 aa).

C131 functions as the Proton donor in the catalytic mechanism. Cysteines 131 and 134 form a disulfide. Residue C134 is the Cysteine sulfenic acid (-SOH) intermediate of the active site.

This sequence belongs to the AhpD family.

The catalysed reaction is N(6)-[(R)-dihydrolipoyl]-L-lysyl-[lipoyl-carrier protein] + a hydroperoxide = N(6)-[(R)-lipoyl]-L-lysyl-[lipoyl-carrier protein] + an alcohol + H2O. Its function is as follows. Antioxidant protein with alkyl hydroperoxidase activity. Required for the reduction of the AhpC active site cysteine residues and for the regeneration of the AhpC enzyme activity. The protein is Alkyl hydroperoxide reductase AhpD of Solibacter usitatus (strain Ellin6076).